The primary structure comprises 374 residues: DNA replication and repair protein RecF (374 aa).

Residue 30–37 coordinates ATP; it reads GENAQGKT.

This sequence belongs to the RecF family.

The protein resides in the cytoplasm. In terms of biological role, the RecF protein is involved in DNA metabolism; it is required for DNA replication and normal SOS inducibility. RecF binds preferentially to single-stranded, linear DNA. It also seems to bind ATP. In Geobacillus sp. (strain WCH70), this protein is DNA replication and repair protein RecF.